The primary structure comprises 37 residues: Large ribosomal subunit protein bL36 (37 aa).

It belongs to the bacterial ribosomal protein bL36 family.

The polypeptide is Large ribosomal subunit protein bL36 (Brevibacillus brevis (strain 47 / JCM 6285 / NBRC 100599)).